Consider the following 282-residue polypeptide: Purine nucleoside phosphorylase (282 aa).

Residues Ser-46, His-78, and Arg-103–His-105 contribute to the phosphate site. Residue Glu-204 is part of the active site. Position 204 (Glu-204) interacts with a purine D-ribonucleoside. A phosphate-binding site is contributed by Ser-223. Asn-246 is a binding site for a purine D-ribonucleoside.

The protein belongs to the PNP/MTAP phosphorylase family. As to quaternary structure, homotrimer.

It carries out the reaction a purine 2'-deoxy-D-ribonucleoside + phosphate = a purine nucleobase + 2-deoxy-alpha-D-ribose 1-phosphate. It participates in purine metabolism; purine nucleoside salvage. In terms of biological role, the purine nucleoside phosphorylases catalyze the phosphorolytic breakdown of the N-glycosidic bond in the beta-(deoxy)ribonucleoside molecules, with the formation of the corresponding free purine bases and pentose-1-phosphate. Cleaves guanosine, inosine, 2'-deoxyguanosine and 2'-deoxyinosine. In Cellulomonas sp, this protein is Purine nucleoside phosphorylase (punA).